Here is a 416-residue protein sequence, read N- to C-terminus: Leu/Ile/Val-binding protein homolog 4 (416 aa).

The signal sequence occupies residues 1 to 26 (MSLKVFLQAGVACAALSLAGAAGASA).

It belongs to the leucine-binding protein family.

Its function is as follows. Component of an amino-acid transport system. This Brucella abortus (strain 2308) protein is Leu/Ile/Val-binding protein homolog 4.